The primary structure comprises 525 residues: Bifunctional purine biosynthesis protein PurH (525 aa).

Positions 10–156 (HRIPIRRALV…KNHPSVAIVT (147 aa)) constitute an MGS-like domain.

It belongs to the PurH family.

The catalysed reaction is (6R)-10-formyltetrahydrofolate + 5-amino-1-(5-phospho-beta-D-ribosyl)imidazole-4-carboxamide = 5-formamido-1-(5-phospho-D-ribosyl)imidazole-4-carboxamide + (6S)-5,6,7,8-tetrahydrofolate. It catalyses the reaction IMP + H2O = 5-formamido-1-(5-phospho-D-ribosyl)imidazole-4-carboxamide. Its pathway is purine metabolism; IMP biosynthesis via de novo pathway; 5-formamido-1-(5-phospho-D-ribosyl)imidazole-4-carboxamide from 5-amino-1-(5-phospho-D-ribosyl)imidazole-4-carboxamide (10-formyl THF route): step 1/1. The protein operates within purine metabolism; IMP biosynthesis via de novo pathway; IMP from 5-formamido-1-(5-phospho-D-ribosyl)imidazole-4-carboxamide: step 1/1. In Nocardioides sp. (strain ATCC BAA-499 / JS614), this protein is Bifunctional purine biosynthesis protein PurH.